Reading from the N-terminus, the 906-residue chain is Cadherin-2 (906 aa).

The signal sequence occupies residues M1–A25. Residues S26–R159 constitute a propeptide that is removed on maturation. A phosphoserine mark is found at S96 and S135. Cadherin domains follow at residues D160–F267, L268–F382, T383–F497, A498–P603, and Q604–R714. Residues D160 to A724 are Extracellular-facing. E170 contributes to the Ca(2+) binding site. N-linked (GlcNAc...) asparagine glycosylation is present at N190. Ca(2+)-binding residues include D226, E228, D259, M260, N261, D262, and N263. Residue N273 is glycosylated (N-linked (GlcNAc...) asparagine). Ca(2+) is bound by residues D293, D295, and N301. N325 carries an N-linked (GlcNAc...) asparagine glycan. Ca(2+) is bound at residue D353. N-linked (GlcNAc...) asparagine glycans are attached at residues N402, N572, N622, N651, and N692. The chain crosses the membrane as a helical span at residues I725–W745. At M746–D906 the chain is on the cytoplasmic side. The segment covering S863 to G880 has biased composition (low complexity). Residues S863–Y884 are disordered.

Homodimer (via extracellular region). Can also form heterodimers with other cadherins (via extracellular region). Dimerization occurs in trans, i.e. with a cadherin chain from another cell. Interacts with CDCP1. Interacts with PCDH8; this complex may also include TAOK2. The interaction with PCDH8 may lead to internalization through TAOK2/p38 MAPK pathway. Identified in a complex containing FGFR4, NCAM1, CDH2, PLCG1, FRS2, SRC, SHC1, GAP43 and CTTN. May interact with OBSCN (via protein kinase domain 2). Interacts with FBXO45. Cleaved by MMP24. Ectodomain cleavage leads to the generation of a soluble 90 kDa N-terminal soluble fragment and a 45 kDa membrane-bound C-terminal fragment 1 (CTF1), which is further cleaved by gamma-secretase into a 35 kDa. Cleavage in neural stem cells by MMP24 affects CDH2-mediated anchorage of neural stem cells to ependymocytes in the adult subependymal zone, leading to modulate neural stem cell quiescence. Post-translationally, may be phosphorylated by OBSCN.

It localises to the cell membrane. It is found in the sarcolemma. The protein resides in the cell junction. Its subcellular location is the cell surface. The protein localises to the desmosome. It localises to the adherens junction. Functionally, calcium-dependent cell adhesion protein; preferentially mediates homotypic cell-cell adhesion by dimerization with a CDH2 chain from another cell. Cadherins may thus contribute to the sorting of heterogeneous cell types. Acts as a regulator of neural stem cells quiescence by mediating anchorage of neural stem cells to ependymocytes in the adult subependymal zone: upon cleavage by MMP24, CDH2-mediated anchorage is affected, leading to modulate neural stem cell quiescence. Plays a role in cell-to-cell junction formation between pancreatic beta cells and neural crest stem (NCS) cells, promoting the formation of processes by NCS cells. Required for proper neurite branching. Required for pre- and postsynaptic organization. CDH2 may be involved in neuronal recognition mechanism. In hippocampal neurons, may regulate dendritic spine density. This Otolemur garnettii (Small-eared galago) protein is Cadherin-2 (CDH2).